A 389-amino-acid polypeptide reads, in one-letter code: Methylthioribose-1-phosphate isomerase (389 aa).

D258 functions as the Proton donor in the catalytic mechanism.

Belongs to the eIF-2B alpha/beta/delta subunits family. MtnA subfamily.

The protein resides in the cytoplasm. Its subcellular location is the nucleus. It carries out the reaction 5-(methylsulfanyl)-alpha-D-ribose 1-phosphate = 5-(methylsulfanyl)-D-ribulose 1-phosphate. The protein operates within amino-acid biosynthesis; L-methionine biosynthesis via salvage pathway; L-methionine from S-methyl-5-thio-alpha-D-ribose 1-phosphate: step 1/6. Functionally, catalyzes the interconversion of methylthioribose-1-phosphate (MTR-1-P) into methylthioribulose-1-phosphate (MTRu-1-P). The polypeptide is Methylthioribose-1-phosphate isomerase (Chaetomium globosum (strain ATCC 6205 / CBS 148.51 / DSM 1962 / NBRC 6347 / NRRL 1970) (Soil fungus)).